The primary structure comprises 256 residues: Small ribosomal subunit protein eS1 (256 aa).

Residues 1–18 (MAVGKNKRLSKGKKGVKK) show a composition bias toward basic residues. Residues 1–21 (MAVGKNKRLSKGKKGVKKRTV) are disordered. Ala2 carries the post-translational modification N-acetylalanine; partial.

The protein belongs to the eukaryotic ribosomal protein eS1 family. In terms of assembly, component of the small ribosomal subunit. Mature ribosomes consist of a small (40S) and a large (60S) subunit. The 40S subunit contains about 33 different proteins and 1 molecule of RNA (18S). The 60S subunit contains about 49 different proteins and 3 molecules of RNA (25S, 5.8S and 5S).

It localises to the cytoplasm. The protein is Small ribosomal subunit protein eS1 (rps1) of Aspergillus niger (strain ATCC MYA-4892 / CBS 513.88 / FGSC A1513).